The sequence spans 763 residues: DNA-binding protein SATB1 (763 aa).

The segment covering methionine 1–glutamate 15 has biased composition (basic and acidic residues). A disordered region spans residues methionine 1–glycine 54. The Nuclear localization signal signature appears at valine 20–leucine 40. Lysine 51 participates in a covalent cross-link: Glycyl lysine isopeptide (Lys-Gly) (interchain with G-Cter in SUMO2). Positions glycine 71–serine 172 constitute a CMP domain. At lysine 136 the chain carries N6-acetyllysine. A Protein interaction motif is present at residues proline 139 to serine 143. Residues lysine 175 to aspartate 248 enclose the CUTL domain. Residue serine 185 is modified to Phosphoserine. The interval tyrosine 224–threonine 278 is nuclear matrix targeting sequence (NMTS). Residues histidine 266–valine 296 are compositionally biased toward polar residues. Residues histidine 266–leucine 307 form a disordered region. 2 consecutive DNA-binding regions (CUT) follow at residues leucine 361–arginine 448 and asparagine 484–serine 571. DNA-binding positions include glutamine 390, arginine 400–arginine 410, and asparagine 425. Positions glutamine 591–glutamine 607 are enriched in low complexity. The segment at glutamine 591–threonine 649 is disordered. Serine 637 is subject to Phosphoserine. The segment at residues threonine 645–glycine 704 is a DNA-binding region (homeobox). Lysine 744 is covalently cross-linked (Glycyl lysine isopeptide (Lys-Gly) (interchain with G-Cter in SUMO)).

This sequence belongs to the CUT homeobox family. As to quaternary structure, interacts with CUX1 (via DNA-binding domains); the interaction inhibits the attachment of both proteins to DNA. Homodimer. Part of the nuclear protein complex gamma-globin promoter and enhancer binding factor (gamma-PE) composed at least of SATB1 and HOXB2. Interaction with CtBP1 when not acetylated stabilizes attachment to DNA and promotes transcription repression. Interacts with PCAF. Interacts with sumoylated PML and HDAC1 via the CMP domain. Interacts also with DYNLT3 and POLR2J2. Binds to EP300. (Microbial infection) Interacts (via the CMP domain) with HIV-1 Tat. Sumoylated. Sumoylation promotes cleavage by caspases. Post-translationally, phosphorylated by PKC. Acetylated by PCAF. Phosphorylated form interacts with HDAC1, but unphosphorylated form interacts with PCAF. DNA binding properties are activated by phosphorylation and inactivated by acetylation. In opposition, gene expression is down-regulated by phosphorylation but up-regulated by acetylation. In terms of processing, cleaved at Asp-254 by caspase-3 and caspase-6 during T-cell apoptosis in thymus and during B-cell stimulation. The cleaved forms cannot dimerize and lose transcription regulation function because of impaired DNA and chromatin association. In terms of tissue distribution, expressed predominantly in thymus.

It localises to the nucleus matrix. It is found in the nucleus. Its subcellular location is the PML body. Its function is as follows. Crucial silencing factor contributing to the initiation of X inactivation mediated by Xist RNA that occurs during embryogenesis and in lymphoma. Binds to DNA at special AT-rich sequences, the consensus SATB1-binding sequence (CSBS), at nuclear matrix- or scaffold-associated regions. Thought to recognize the sugar-phosphate structure of double-stranded DNA. Transcriptional repressor controlling nuclear and viral gene expression in a phosphorylated and acetylated status-dependent manner, by binding to matrix attachment regions (MARs) of DNA and inducing a local chromatin-loop remodeling. Acts as a docking site for several chromatin remodeling enzymes (e.g. PML at the MHC-I locus) and also by recruiting corepressors (HDACs) or coactivators (HATs) directly to promoters and enhancers. Modulates genes that are essential in the maturation of the immune T-cell CD8SP from thymocytes. Required for the switching of fetal globin species, and beta- and gamma-globin genes regulation during erythroid differentiation. Plays a role in chromatin organization and nuclear architecture during apoptosis. Interacts with the unique region (UR) of cytomegalovirus (CMV). Alu-like motifs and SATB1-binding sites provide a unique chromatin context which seems preferentially targeted by the HIV-1 integration machinery. Moreover, HIV-1 Tat may overcome SATB1-mediated repression of IL2 and IL2RA (interleukin) in T-cells by binding to the same domain than HDAC1. Delineates specific epigenetic modifications at target gene loci, directly up-regulating metastasis-associated genes while down-regulating tumor-suppressor genes. Reprograms chromatin organization and the transcription profiles of breast tumors to promote growth and metastasis. Promotes neuronal differentiation of neural stem/progenitor cells in the adult subventricular zone, possibly by positively regulating the expression of NEUROD1. The sequence is that of DNA-binding protein SATB1 from Homo sapiens (Human).